The chain runs to 789 residues: Trans-4-hydroxy-L-proline dehydratase (789 aa).

A PFL domain is found at 7–663 (ERTKKLREES…IMGASPNGRL (657 aa)). Cys-434 (cysteine radical intermediate) is an active-site residue. Catalysis depends on Glu-436, which acts as the Proton acceptor. The 120-residue stretch at 670–789 (EGISPEKGGD…EIIGRTEQTF (120 aa)) folds into the Glycine radical domain. Glycine radical is present on Gly-765.

This sequence belongs to the glycyl radical enzyme (GRE) family. HYPD subfamily. Post-translationally, requires the activating protein PflE to generate the key active site glycyl radical on Gly-765 that is involved in catalysis.

It carries out the reaction trans-4-hydroxy-L-proline = (S)-1-pyrroline-5-carboxylate + H2O + H(+). In terms of biological role, glycine radical enzyme that catalyzes the dehydration of the non-proteinogenic amino acid trans-4-hydroxy-L-proline (Hyp) to produce delta(1)-pyrroline-5-carboxylate (P5C). Is involved in the anaerobic degradation of 4-hydroxyproline. The chain is Trans-4-hydroxy-L-proline dehydratase from Clostridioides difficile (Peptoclostridium difficile).